The following is a 248-amino-acid chain: Probable transcriptional regulatory protein Fphi_1565 (248 aa).

The protein belongs to the TACO1 family.

It localises to the cytoplasm. The protein is Probable transcriptional regulatory protein Fphi_1565 of Francisella philomiragia subsp. philomiragia (strain ATCC 25017 / CCUG 19701 / FSC 153 / O#319-036).